The primary structure comprises 373 residues: Chaperone protein DnaJ (373 aa).

Residues 5–69 enclose the J domain; that stretch reads DYYEVLGVNK…NKRANYDQFG (65 aa). The CR-type zinc-finger motif lies at 130–212; it reads GTKKEISIKK…CKGKGTENKT (83 aa). Zn(2+) is bound by residues Cys143, Cys146, Cys160, Cys163, Cys186, Cys189, Cys200, and Cys203. 4 CXXCXGXG motif repeats span residues 143–150, 160–167, 186–193, and 200–207; these read CHTCNGDG, CSYCNGAG, CPKCEGSG, and CPTCKGKG.

It belongs to the DnaJ family. In terms of assembly, homodimer. Requires Zn(2+) as cofactor.

The protein localises to the cytoplasm. Functionally, participates actively in the response to hyperosmotic and heat shock by preventing the aggregation of stress-denatured proteins and by disaggregating proteins, also in an autonomous, DnaK-independent fashion. Unfolded proteins bind initially to DnaJ; upon interaction with the DnaJ-bound protein, DnaK hydrolyzes its bound ATP, resulting in the formation of a stable complex. GrpE releases ADP from DnaK; ATP binding to DnaK triggers the release of the substrate protein, thus completing the reaction cycle. Several rounds of ATP-dependent interactions between DnaJ, DnaK and GrpE are required for fully efficient folding. Also involved, together with DnaK and GrpE, in the DNA replication of plasmids through activation of initiation proteins. The chain is Chaperone protein DnaJ from Staphylococcus epidermidis (strain ATCC 12228 / FDA PCI 1200).